Reading from the N-terminus, the 513-residue chain is Cytochrome P450 72A552 (513 aa).

A helical membrane pass occupies residues 2 to 22 (EISVASVTVSVVIAVVTWWVW). Residue cysteine 460 coordinates heme.

Belongs to the cytochrome P450 family. Heme serves as cofactor.

The protein resides in the membrane. The enzyme catalyses oleanolate + reduced [NADPH--hemoprotein reductase] + O2 = hederagenin + oxidized [NADPH--hemoprotein reductase] + H2O + H(+). Its function is as follows. Catalyzes the oxidation of oleanolate at the C-23 position to form hederagenin. This chain is Cytochrome P450 72A552, found in Barbarea vulgaris (Yellow rocket).